The primary structure comprises 126 residues: Methylglyoxal synthase (126 aa).

Residues 1 to 126 (MKALALIAHD…IAWIRKGTPQ (126 aa)) enclose the MGS-like domain. Residues H9, K13, 35-38 (TGTT), and 55-56 (SG) each bind substrate. The Proton donor/acceptor role is filled by D61. Position 88 (H88) interacts with substrate.

Belongs to the methylglyoxal synthase family.

The catalysed reaction is dihydroxyacetone phosphate = methylglyoxal + phosphate. Functionally, catalyzes the formation of methylglyoxal from dihydroxyacetone phosphate. This Thermus thermophilus (strain ATCC BAA-163 / DSM 7039 / HB27) protein is Methylglyoxal synthase.